We begin with the raw amino-acid sequence, 122 residues long: Large ribosomal subunit protein uL14 (122 aa).

Belongs to the universal ribosomal protein uL14 family. In terms of assembly, part of the 50S ribosomal subunit. Forms a cluster with proteins L3 and L19. In the 70S ribosome, L14 and L19 interact and together make contacts with the 16S rRNA in bridges B5 and B8.

In terms of biological role, binds to 23S rRNA. Forms part of two intersubunit bridges in the 70S ribosome. This chain is Large ribosomal subunit protein uL14, found in Trichodesmium erythraeum (strain IMS101).